A 148-amino-acid chain; its full sequence is Deoxyuridine 5'-triphosphate nucleotidohydrolase (148 aa).

Substrate is bound by residues 67 to 69 (RSG), asparagine 80, 84 to 86 (LID), and methionine 94.

This sequence belongs to the dUTPase family. Mg(2+) is required as a cofactor.

The enzyme catalyses dUTP + H2O = dUMP + diphosphate + H(+). It functions in the pathway pyrimidine metabolism; dUMP biosynthesis; dUMP from dCTP (dUTP route): step 2/2. Its function is as follows. This enzyme is involved in nucleotide metabolism: it produces dUMP, the immediate precursor of thymidine nucleotides and it decreases the intracellular concentration of dUTP so that uracil cannot be incorporated into DNA. This chain is Deoxyuridine 5'-triphosphate nucleotidohydrolase, found in Burkholderia lata (strain ATCC 17760 / DSM 23089 / LMG 22485 / NCIMB 9086 / R18194 / 383).